A 314-amino-acid chain; its full sequence is UDP-N-acetylenolpyruvoylglucosamine reductase (314 aa).

Residues 25–191 (KIGGPADLFA…VRVGMELRWG (167 aa)) form the FAD-binding PCMH-type domain. The active site involves R170. The active-site Proton donor is S220. Residue E291 is part of the active site.

The protein belongs to the MurB family. It depends on FAD as a cofactor.

The protein localises to the cytoplasm. It carries out the reaction UDP-N-acetyl-alpha-D-muramate + NADP(+) = UDP-N-acetyl-3-O-(1-carboxyvinyl)-alpha-D-glucosamine + NADPH + H(+). It functions in the pathway cell wall biogenesis; peptidoglycan biosynthesis. In terms of biological role, cell wall formation. The chain is UDP-N-acetylenolpyruvoylglucosamine reductase from Heliobacterium modesticaldum (strain ATCC 51547 / Ice1).